Consider the following 561-residue polypeptide: Developmental and secondary metabolism regulator veA (561 aa).

Disordered stretches follow at residues 1-23 (MANRPSLMPPHNETEHSVSRITR), 41-60 (ARACGAGAKSSADRRPVDPP), and 258-361 (AYAR…PQGI). The segment covering 12–23 (NETEHSVSRITR) has biased composition (basic and acidic residues). The region spanning 25–233 (GKQLTYKLSV…AEQGCRVRIR (209 aa)) is the Velvet domain. The Nuclear localization signal signature appears at 39 to 44 (ERARAC). Basic and acidic residues predominate over residues 258-268 (AYARSSDRFTT). The segment covering 324 to 339 (SHSQTPSYQSHLSFGS) has biased composition (polar residues). A compositionally biased stretch (pro residues) spans 347-357 (PHMPPTPPPVA). The tract at residues 438–485 (RPQTPNLPAMPPPKPLSNDYANHVVPSVECTSPGGSGGGGYDNVRGKR) is PEST. The segment at 491–524 (GPTYGKRSHEDTFGLDDRSMQNGMRPDTEPYPAY) is disordered. Basic and acidic residues predominate over residues 497–509 (RSHEDTFGLDDRS).

It belongs to the velvet family. VeA subfamily. As to quaternary structure, component of the heterotrimeric velvet complex composed of laeA, veA and velB; velA acting as a bridging protein between laeA and velB. Interacts with kapA. Interacts with vosA and velc.

It localises to the nucleus. The protein resides in the cytoplasm. Its function is as follows. Component of the velvet transcription factor complex that controls sexual/asexual developmental ratio in response to light, promoting sexual development in the darkness while stimulating asexual sporulation under illumination. The velvet complex acts as a global regulator for secondary metabolite gene expression. Controls the expression of the penicillin gene cluster. Positively controls the expression of the class V chitinase chiB1. Positively controls the expression of the transcription factor atfA. Required for cell wall integrity and controls hyphal branching. This chain is Developmental and secondary metabolism regulator veA, found in Penicillium rubens (strain ATCC 28089 / DSM 1075 / NRRL 1951 / Wisconsin 54-1255) (Penicillium chrysogenum).